We begin with the raw amino-acid sequence, 603 residues long: Elongation factor 4 (603 aa).

The 183-residue stretch at 7–189 folds into the tr-type G domain; sequence VRIRNFCIIA…AVVERVPPPP (183 aa). GTP is bound by residues 19-24 and 136-139; these read DHGKST and NKID.

The protein belongs to the TRAFAC class translation factor GTPase superfamily. Classic translation factor GTPase family. LepA subfamily.

The protein localises to the cell inner membrane. It carries out the reaction GTP + H2O = GDP + phosphate + H(+). Its function is as follows. Required for accurate and efficient protein synthesis under certain stress conditions. May act as a fidelity factor of the translation reaction, by catalyzing a one-codon backward translocation of tRNAs on improperly translocated ribosomes. Back-translocation proceeds from a post-translocation (POST) complex to a pre-translocation (PRE) complex, thus giving elongation factor G a second chance to translocate the tRNAs correctly. Binds to ribosomes in a GTP-dependent manner. The polypeptide is Elongation factor 4 (Nostoc sp. (strain PCC 7120 / SAG 25.82 / UTEX 2576)).